We begin with the raw amino-acid sequence, 410 residues long: Replication factor C large subunit (410 aa).

46-53 (GDPGTGKT) contributes to the ATP binding site.

It belongs to the activator 1 small subunits family. RfcL subfamily. Heteromultimer composed of small subunits (RfcS) and large subunits (RfcL).

Its function is as follows. Part of the RFC clamp loader complex which loads the PCNA sliding clamp onto DNA. The sequence is that of Replication factor C large subunit from Picrophilus torridus (strain ATCC 700027 / DSM 9790 / JCM 10055 / NBRC 100828 / KAW 2/3).